A 263-amino-acid chain; its full sequence is MRPGAPGPLWPLPWGALAWAVGFVSSMGSGNPAPGGVCWLQQGQEATCSLVLQTDVTRAECCASGNIDTAWSNLTHPGNKINLLGFLGLVHCLPCKDSCDGVECGPGKACRMLGGRPRCECAPDCSGLPARLQVCGSDGATYRDECELRAARCRGHPDLSVMYRGRCRKSCEHVVCPRPQSCVVDQTGSAHCVVCRAAPCPVPSSPGQELCGNNNVTYISSCHMRQATCFLGRSIGVRHAGSCAGTPEEPPGGESAEEEENFV.

Positions 1-26 are cleaved as a signal peptide; sequence MRPGAPGPLWPLPWGALAWAVGFVSS. The TB domain occupies 36–107; that stretch reads GVCWLQQGQE…SCDGVECGPG (72 aa). Intrachain disulfides connect C38/C61, C48/C92, C62/C95, C99/C110, C104/C119, C121/C153, C125/C146, C135/C167, C171/C182, C176/C192, C195/C229, C200/C222, and C211/C243. N73 is a glycosylation site (N-linked (GlcNAc...) asparagine). The Follistatin-like 1 domain occupies 99 to 119; the sequence is CDGVECGPGKACRMLGGRPRC. In terms of domain architecture, Kazal-like 1 spans 113–169; sequence LGGRPRCECAPDCSGLPARLQVCGSDGATYRDECELRAARCRGHPDLSVMYRGRCRK. The 24-residue stretch at 170-193 folds into the Follistatin-like 2 domain; sequence SCEHVVCPRPQSCVVDQTGSAHCV. Residues 189–245 form the Kazal-like 2 domain; that stretch reads SAHCVVCRAAPCPVPSSPGQELCGNNNVTYISSCHMRQATCFLGRSIGVRHAGSCAG. Residue N215 is glycosylated (N-linked (GlcNAc...) asparagine). The tract at residues 242–263 is disordered; sequence SCAGTPEEPPGGESAEEEENFV. S255 bears the Phosphoserine; by FAM20C mark.

In terms of assembly, interacts with INHBA and INHBB. Interacts with FN1. Interacts with ADAM12. Isoform 2 interacts with MLLT10; the interaction enhances MLLT10 in vitro transcriptional activity and self-association. Interacts with MSTN. In terms of tissue distribution, expressed in a wide range of tissues.

It is found in the secreted. Its subcellular location is the nucleus. Its function is as follows. Isoform 1 or the secreted form is a binding and antagonizing protein for members of the TGF-beta family, such as activin, BMP2 and MSTN. Inhibits activin A-, activin B-, BMP2- and MSDT-induced cellular signaling; more effective on activin A than on activin B. Involved in bone formation; inhibits osteoclast differentiation. Involved in hematopoiesis; involved in differentiation of hemopoietic progenitor cells, increases hematopoietic cell adhesion to fibronectin and seems to contribute to the adhesion of hematopoietic precursor cells to the bone marrow stroma. Isoform 2 or the nuclear form is probably involved in transcriptional regulation via interaction with MLLT10. This chain is Follistatin-related protein 3 (FSTL3), found in Homo sapiens (Human).